The chain runs to 404 residues: MPGLTCNACNMEFKDEEERNLHYKSDWHRYNLKRKVAGVPGVTEALFEARQSALAQEKNKSNEAPMLYTCAICAKGYRSSKAHEQHLQSRSHVLRVSQGTSINGEEDIAIIRQLPRRVQHRGSIDDDSEDEWVEVDSDEELAAEEASDSLSKLNVNESGSAEDMDDDGDADKYELDPTCCLMCDKKHKTLESCMLHMHKHHGFFIPDIEYLKDPEGLLTYLGLKVKRDFMCLYCNELCRPFSSLEAVRKHMEAKSHCKLHYGDGDDEEDAELEEFYDYSSSYVDEAGKQIVVSGETDNTVELVGGSELLITEKSENTTTSKTLGSREFMRYYRQKPRPTSQDSNQIIASLSSRYKSLGLKTVPSKEETLRMKVRKEMSKRGETMRTKIGVKSNVIRNLPNNVPY.

C2H2-type zinc fingers lie at residues Leu-4–His-28 and Tyr-68–His-92. Positions Gln-119–Asp-169 are disordered. 2 stretches are compositionally biased toward acidic residues: residues Asp-125–Ser-147 and Ser-160–Asp-169. 2 consecutive C2H2-type zinc fingers follow at residues Thr-178–His-201 and Phe-229–His-256.

It belongs to the REI1 family. Can form homodimer. Interacts with RLP24, RPL24A, RPL24B, EBP1 and JJJ1.

The protein resides in the cytoplasm. In terms of biological role, pre-60S-associated factor involved in the cytoplasmic maturation of the 60S subunit. Involved in the dissociation and recycling of other late pre-60S factors before newly synthesized large ribosomal subunits enter translation. Can complement the growth defect of a yeast mutant lacking REI1. Required for leaf growth under cold temperature conditions. This chain is Cytoplasmic 60S subunit biogenesis factor REI1 homolog 1, found in Arabidopsis thaliana (Mouse-ear cress).